The chain runs to 231 residues: tRNA (guanine-N(1)-)-methyltransferase (231 aa).

Residues Gly-112 and 132–137 (LGDFVL) each bind S-adenosyl-L-methionine.

This sequence belongs to the RNA methyltransferase TrmD family. As to quaternary structure, homodimer.

The protein localises to the cytoplasm. It catalyses the reaction guanosine(37) in tRNA + S-adenosyl-L-methionine = N(1)-methylguanosine(37) in tRNA + S-adenosyl-L-homocysteine + H(+). Specifically methylates guanosine-37 in various tRNAs. The protein is tRNA (guanine-N(1)-)-methyltransferase of Microcystis aeruginosa (strain NIES-843 / IAM M-2473).